Here is a 140-residue protein sequence, read N- to C-terminus: Ribosome maturation factor RimP (140 aa).

This sequence belongs to the RimP family.

The protein localises to the cytoplasm. In terms of biological role, required for maturation of 30S ribosomal subunits. In Campylobacter fetus subsp. fetus (strain 82-40), this protein is Ribosome maturation factor RimP.